The primary structure comprises 176 residues: Probable Brix domain-containing ribosomal biogenesis protein (176 aa).

The 171-residue stretch at 6–176 (IEIVFTSSRD…QLYDRNKNIN (171 aa)) folds into the Brix domain.

Its function is as follows. Probably involved in the biogenesis of the ribosome. This is Probable Brix domain-containing ribosomal biogenesis protein from Sulfurisphaera tokodaii (strain DSM 16993 / JCM 10545 / NBRC 100140 / 7) (Sulfolobus tokodaii).